We begin with the raw amino-acid sequence, 211 residues long: MSNGPLRVGIGGPVGAGKTTLTEQIARALAPRLSMAVITNDIYTREDAEALMRAQVLPSERIRGVETGGCPHTAIREDASINLAAIAELNAAFPDLDLVLIESGGDNLAATFSPELADLTIYVIDTAAGQDIPRKRGPGLARSDLLVVNKTDLAPHVGVDAALLEADARASRAGRPVVMAALRHGKGVAEVVDFLIEQGGLQPCPAHSHGQ.

12 to 19 (GPVGAGKT) is a binding site for GTP.

It belongs to the SIMIBI class G3E GTPase family. UreG subfamily. In terms of assembly, homodimer. UreD, UreF and UreG form a complex that acts as a GTP-hydrolysis-dependent molecular chaperone, activating the urease apoprotein by helping to assemble the nickel containing metallocenter of UreC. The UreE protein probably delivers the nickel.

It is found in the cytoplasm. Functionally, facilitates the functional incorporation of the urease nickel metallocenter. This process requires GTP hydrolysis, probably effectuated by UreG. This is Urease accessory protein UreG from Paracoccus denitrificans (strain Pd 1222).